A 328-amino-acid polypeptide reads, in one-letter code: 3-ketodihydrosphingosine reductase TSC10 (328 aa).

Leu16 is an NADP(+) binding site. Gly19, Ser21, and Gly23 together coordinate NADPH. A GXSXG motif is present at residues 19–23 (GASQG). Leu24 provides a ligand contact to NADP(+). The NADPH site is built by Arg44, Lys48, and Asp73. Asp73 is an NADP(+) binding site. Ser161 (proton donor) is an active-site residue. NADP(+) is bound by residues Tyr175, Lys179, and Ser210. The active-site Proton acceptor is the Tyr175. Lys179 (lowers pKa of active site Tyr) is an active-site residue. A helical transmembrane segment spans residues 277 to 297 (FFQVIVSFIFSIIAPIANYVV).

The protein belongs to the short-chain dehydrogenases/reductases (SDR) family.

The protein resides in the endoplasmic reticulum membrane. It carries out the reaction sphinganine + NADP(+) = 3-oxosphinganine + NADPH + H(+). The protein operates within lipid metabolism; sphingolipid metabolism. In terms of biological role, catalyzes the reduction of 3'-oxosphinganine (3-ketodihydrosphingosine/KDS) to sphinganine (dihydrosphingosine/DHS), the second step of de novo sphingolipid biosynthesis. In Debaryomyces hansenii (strain ATCC 36239 / CBS 767 / BCRC 21394 / JCM 1990 / NBRC 0083 / IGC 2968) (Yeast), this protein is 3-ketodihydrosphingosine reductase TSC10 (TSC10).